Here is a 497-residue protein sequence, read N- to C-terminus: 3-octaprenyl-4-hydroxybenzoate carboxy-lyase (497 aa).

Residue Asn175 coordinates Mn(2+). Residues 178-180, 192-194, and 197-198 each bind prenylated FMN; these read IYR, RWL, and RG. Glu241 lines the Mn(2+) pocket. The Proton donor role is filled by Asp290.

This sequence belongs to the UbiD family. As to quaternary structure, homohexamer. The cofactor is prenylated FMN. Mn(2+) serves as cofactor.

Its subcellular location is the cell membrane. It catalyses the reaction a 4-hydroxy-3-(all-trans-polyprenyl)benzoate + H(+) = a 2-(all-trans-polyprenyl)phenol + CO2. It functions in the pathway cofactor biosynthesis; ubiquinone biosynthesis. Functionally, catalyzes the decarboxylation of 3-octaprenyl-4-hydroxy benzoate to 2-octaprenylphenol, an intermediate step in ubiquinone biosynthesis. The protein is 3-octaprenyl-4-hydroxybenzoate carboxy-lyase of Escherichia coli O157:H7.